The primary structure comprises 324 residues: o-succinylbenzoate synthase (324 aa).

The active-site Proton donor is the K135. Mg(2+) is bound by residues D163, E192, and D215. The active-site Proton acceptor is the K237.

The protein belongs to the mandelate racemase/muconate lactonizing enzyme family. MenC type 1 subfamily. It depends on a divalent metal cation as a cofactor.

It carries out the reaction (1R,6R)-6-hydroxy-2-succinyl-cyclohexa-2,4-diene-1-carboxylate = 2-succinylbenzoate + H2O. The protein operates within quinol/quinone metabolism; 1,4-dihydroxy-2-naphthoate biosynthesis; 1,4-dihydroxy-2-naphthoate from chorismate: step 4/7. It participates in quinol/quinone metabolism; menaquinone biosynthesis. In terms of biological role, converts 2-succinyl-6-hydroxy-2,4-cyclohexadiene-1-carboxylate (SHCHC) to 2-succinylbenzoate (OSB). This is o-succinylbenzoate synthase from Aliivibrio fischeri (strain MJ11) (Vibrio fischeri).